Consider the following 278-residue polypeptide: HTH-type transcriptional activator RhaS (278 aa).

An HTH araC/xylS-type domain is found at 174–272; sequence NLLLAWLEDH…NWSPRDIRQG (99 aa). DNA-binding regions (H-T-H motif) lie at residues 191–212 and 239–262; these read DAVADQFSLSLRTLHRQLKQQT and VTDIAYRCGFSDSNHFSTLFRREF.

As to quaternary structure, binds DNA as a dimer.

It is found in the cytoplasm. Functionally, activates expression of the rhaBAD and rhaT operons. In Escherichia coli (strain SMS-3-5 / SECEC), this protein is HTH-type transcriptional activator RhaS.